Consider the following 117-residue polypeptide: Ig lambda-1 chain V region (117 aa).

A signal peptide spans methionine 1 to serine 20. Glutamine 21 bears the Pyrrolidone carboxylic acid mark. An Ig-like domain is found at glutamine 21–histidine 117.

The sequence is that of Ig lambda-1 chain V region from Mus musculus (Mouse).